Here is a 567-residue protein sequence, read N- to C-terminus: Synaptotagmin-like protein 1 (567 aa).

The RabBD domain occupies 31-87 (LLDLSFLTEEEQEAISDVLKRDAHLRQLEEGRVSKLRASLEDPWQLKILTGDWFQEA). The segment at 103–255 (RASIRRKKSP…VSSLNSSTLS (153 aa)) is disordered. S120 carries the post-translational modification Phosphoserine. 2 stretches are compositionally biased toward acidic residues: residues 122 to 135 (GEAE…IEGE) and 170 to 184 (GQEE…ELEA). A compositionally biased stretch (polar residues) spans 208-219 (ESQPTPAQSKAT). S220 bears the Phosphoserine mark. Low complexity predominate over residues 235–255 (SLDRMLSSSSSVSSLNSSTLS). 2 C2 domains span residues 271–390 (VRGS…WLPL) and 403–532 (SRGL…VPWM).

Monomer. Binds NCF2 and NRXN1. Binds RAB27A that has been activated by GTP-binding via its N-terminus. In terms of tissue distribution, highly expressed in lung. Detected at lower levels in spleen, liver and kidney, and at very low levels in heart, brain and skeletal muscle. Expressed in cytotoxic T-lymphocytes (CTL).

It is found in the endomembrane system. The protein resides in the cell membrane. In terms of biological role, binds phosphatidylinositol 3,4,5-trisphosphate. May play a role in vesicle trafficking. Acts as a RAB27A effector protein and may play a role in cytotoxic granule exocytosis in lymphocytes. This chain is Synaptotagmin-like protein 1 (Sytl1), found in Mus musculus (Mouse).